The chain runs to 141 residues: MARKVLGKISLQIAAGKATPAPPVGPALGQYGVNIMGFCKEYNARTANQAGYIVPVEITVFEDRSFTFVIKSPPASDLLKKAANIDKGSGEPNKKKIGKVPRAKLLEIAETKKEDLNASDIEAAVKMIEGTARSMGLEIVD.

The protein belongs to the universal ribosomal protein uL11 family. Part of the ribosomal stalk of the 50S ribosomal subunit. Interacts with L10 and the large rRNA to form the base of the stalk. L10 forms an elongated spine to which L12 dimers bind in a sequential fashion forming a multimeric L10(L12)X complex. Post-translationally, one or more lysine residues are methylated.

In terms of biological role, forms part of the ribosomal stalk which helps the ribosome interact with GTP-bound translation factors. The protein is Large ribosomal subunit protein uL11 of Syntrophomonas wolfei subsp. wolfei (strain DSM 2245B / Goettingen).